Reading from the N-terminus, the 24-residue chain is Caerin-2.1 (24 aa).

It belongs to the frog skin active peptide (FSAP) family. Caerin subfamily. Expressed by the skin dorsal glands.

It localises to the secreted. Its function is as follows. Inhibits the formation of NO by neuronal nitric oxide synthase. In Litoria rothii (Roth's tree frog), this protein is Caerin-2.1.